The sequence spans 504 residues: Putative ribose/galactose/methyl galactoside import ATP-binding protein (504 aa).

2 consecutive ABC transporter domains span residues 5-242 (ISVK…GRNL) and 252-497 (TSAN…TRRE). 37–44 (GENGAGKS) lines the ATP pocket.

This sequence belongs to the ABC transporter superfamily. Carbohydrate importer 2 (CUT2) (TC 3.A.1.2) family.

It is found in the cell inner membrane. The catalysed reaction is D-ribose(out) + ATP + H2O = D-ribose(in) + ADP + phosphate + H(+). It catalyses the reaction D-galactose(out) + ATP + H2O = D-galactose(in) + ADP + phosphate + H(+). In terms of biological role, part of an ABC transporter complex involved in carbohydrate import. Could be involved in ribose, galactose and/or methyl galactoside import. Responsible for energy coupling to the transport system. In Albidiferax ferrireducens (strain ATCC BAA-621 / DSM 15236 / T118) (Rhodoferax ferrireducens), this protein is Putative ribose/galactose/methyl galactoside import ATP-binding protein.